A 96-amino-acid chain; its full sequence is Colicin-K immunity protein (96 aa).

Residues 73 to 93 traverse the membrane as a helical segment; it reads ALFYLLMAIPVGLPSFIYYTL.

It is found in the cell membrane. In terms of biological role, this protein is able to protect a cell, which harbors the plasmid ColK encoding colicin K, against colicin K. This is Colicin-K immunity protein (cki) from Escherichia coli.